Here is a 294-residue protein sequence, read N- to C-terminus: DNA replication complex GINS protein SLD5 (294 aa).

It belongs to the GINS4/SLD5 family. In terms of assembly, component of the GINS complex which is a heterotetramer composed of SLD5, PSF1, PSF2 and PSF3. Interacts with PSF2.

Its subcellular location is the nucleus. Its function is as follows. Required for DNA replication. Functions as part of the GINS complex which plays an essential role in the initiation of DNA replication by binding to DNA replication origins and facilitating the assembly of the DNA replication machinery. This is DNA replication complex GINS protein SLD5 from Saccharomyces cerevisiae (strain ATCC 204508 / S288c) (Baker's yeast).